We begin with the raw amino-acid sequence, 230 residues long: Geranylgeranylglyceryl phosphate synthase (230 aa).

Lysine 13 lines the sn-glycerol 1-phosphate pocket. Aspartate 15 and threonine 41 together coordinate Mg(2+). Sn-glycerol 1-phosphate is bound by residues 161–166 (YIEYSG), glycine 191, and 211–212 (GN).

Belongs to the GGGP/HepGP synthase family. Group I subfamily. Mg(2+) serves as cofactor.

Its subcellular location is the cytoplasm. It catalyses the reaction sn-glycerol 1-phosphate + (2E,6E,10E)-geranylgeranyl diphosphate = sn-3-O-(geranylgeranyl)glycerol 1-phosphate + diphosphate. The protein operates within membrane lipid metabolism; glycerophospholipid metabolism. Prenyltransferase that catalyzes the transfer of the geranylgeranyl moiety of geranylgeranyl diphosphate (GGPP) to the C3 hydroxyl of sn-glycerol-1-phosphate (G1P). This reaction is the first ether-bond-formation step in the biosynthesis of archaeal membrane lipids. This chain is Geranylgeranylglyceryl phosphate synthase, found in Methanoculleus marisnigri (strain ATCC 35101 / DSM 1498 / JR1).